A 315-amino-acid chain; its full sequence is HVA22-like protein h (315 aa).

The interval 148 to 315 is disordered; that stretch reads PKPKPKEKKQ…RKARSAGAPR (168 aa). The segment covering 173–190 has biased composition (polar residues); that stretch reads ATSQAASSNPQVRLQSKK. Residues 234–248 are compositionally biased toward pro residues; that stretch reads PPGPPPPPPPPPPSP.

This sequence belongs to the DP1 family.

The chain is HVA22-like protein h (HVA22H) from Arabidopsis thaliana (Mouse-ear cress).